We begin with the raw amino-acid sequence, 427 residues long: Adenylosuccinate synthetase (427 aa).

Residues 12–18 and 40–42 each bind GTP; these read GDEGKGK and GHT. The active-site Proton acceptor is the D13. Mg(2+) is bound by residues D13 and G40. IMP is bound by residues 13 to 16, 38 to 41, T126, R140, Q221, T236, and R299; these read DEGK and NAGH. The Proton donor role is filled by H41. 295–301 is a binding site for substrate; that stretch reads STTKRPR. Residues R301, 327 to 329, and 409 to 411 each bind GTP; these read KLD and SVG.

The protein belongs to the adenylosuccinate synthetase family. Homodimer. Requires Mg(2+) as cofactor.

The protein resides in the cytoplasm. The catalysed reaction is IMP + L-aspartate + GTP = N(6)-(1,2-dicarboxyethyl)-AMP + GDP + phosphate + 2 H(+). The protein operates within purine metabolism; AMP biosynthesis via de novo pathway; AMP from IMP: step 1/2. Plays an important role in the de novo pathway of purine nucleotide biosynthesis. Catalyzes the first committed step in the biosynthesis of AMP from IMP. This Borrelia recurrentis (strain A1) protein is Adenylosuccinate synthetase.